A 552-amino-acid polypeptide reads, in one-letter code: Berberine bridge enzyme-like 6 (552 aa).

The first 16 residues, 1–16 (MKEAFVFLLCLTNKFP), serve as a signal peptide directing secretion. Cys-56 and Cys-119 form a disulfide bridge. 6 N-linked (GlcNAc...) asparagine glycosylation sites follow: Asn-76, Asn-161, Asn-280, Asn-364, Asn-419, and Asn-463. The FAD-binding PCMH-type domain occupies 93–270 (FSSPNFKKLL…LSWKINLVEV (178 aa)). A cross-link (6-(S-cysteinyl)-8alpha-(pros-histidyl)-FAD (His-Cys)) is located at residues 134-196 (HDNEGFSYMS…QTLAFPAGVC (63 aa)).

The protein belongs to the oxygen-dependent FAD-linked oxidoreductase family. FAD serves as cofactor. In terms of processing, the FAD cofactor is bound via a bicovalent 6-S-cysteinyl, 8alpha-N1-histidyl FAD linkage.

The protein localises to the secreted. Its subcellular location is the cell wall. Functionally, probable flavin-dependent oxidoreductase. This Arabidopsis thaliana (Mouse-ear cress) protein is Berberine bridge enzyme-like 6.